A 248-amino-acid chain; its full sequence is MGGSTSKNSFKNTTNIISNSIFNQMQSCISMLDGKNYIGVFGDGNILNHVFQDLNLSLDTSCVQKHVNKENFITNLSNQITQNLKDQEVALTQWMDAGHHDQKTDIEENIKVNLTTTLIQNCVSSLSGMNVLVVKGNGNIVENATQKQSQQIISNCLQGSKQAIDTTTGITNTVNQYSHYTSKNFFDFIADAISAVFKNIMVAAVVIVLIIVGFIAVFYFLHSRHRHEEEEEAEPLISNKVLKNAAVS.

Gly2 carries the N-myristoyl glycine; by host lipid modification. Over 2–199 (GGSTSKNSFK…ADAISAVFKN (198 aa)) the chain is Cytoplasmic. A helical membrane pass occupies residues 200–220 (IMVAAVVIVLIIVGFIAVFYF). The Extracellular segment spans residues 221–248 (LHSRHRHEEEEEAEPLISNKVLKNAAVS).

Belongs to the asfivirus E248R family. In terms of assembly, interacts with A151R.

It is found in the host membrane. Its subcellular location is the virion membrane. Its function is as follows. Essential for viral fusion with host endosomal membrane and core release. This is Inner membrane protein pE248R from Ornithodoros (relapsing fever ticks).